A 300-amino-acid polypeptide reads, in one-letter code: Small ribosomal subunit protein uS2 (300 aa).

Positions 228 to 300 (RAGLSADKDA…PAAEAPSTEA (73 aa)) are disordered. The span at 258-300 (AAPAAEAAPAAEAAPAAEAAPAAEAQAAPAAEAPAAEAPSTEA) shows a compositional bias: low complexity.

The protein belongs to the universal ribosomal protein uS2 family.

The sequence is that of Small ribosomal subunit protein uS2 from Rhodococcus jostii (strain RHA1).